The following is a 193-amino-acid chain: Acyl carrier protein phosphodiesterase (193 aa).

It belongs to the AcpH family.

The enzyme catalyses holo-[ACP] + H2O = apo-[ACP] + (R)-4'-phosphopantetheine + H(+). Converts holo-ACP to apo-ACP by hydrolytic cleavage of the phosphopantetheine prosthetic group from ACP. This is Acyl carrier protein phosphodiesterase from Salmonella agona (strain SL483).